Here is an 87-residue protein sequence, read N- to C-terminus: Toxin Cll5c (87 aa).

The first 19 residues, 1–19 (MNSLLMITACLVLFGTVWA), serve as a signal peptide directing secretion. An LCN-type CS-alpha/beta domain is found at 20-85 (KEGYLVNKST…TYPLPNKSCS (66 aa)). Cystine bridges form between cysteine 31–cysteine 84, cysteine 35–cysteine 60, cysteine 44–cysteine 65, and cysteine 48–cysteine 67. The propeptide at 86–87 (KK) is removed by a carboxypeptidase.

It belongs to the long (4 C-C) scorpion toxin superfamily. Sodium channel inhibitor family. Beta subfamily. Expressed by the venom gland.

It is found in the secreted. In terms of biological role, beta toxins bind voltage-independently at site-4 of sodium channels (Nav) and shift the voltage of activation toward more negative potentials thereby affecting sodium channel activation and promoting spontaneous and repetitive firing. The protein is Toxin Cll5c of Centruroides limpidus (Mexican scorpion).